Here is a 72-residue protein sequence, read N- to C-terminus: Hypotensin (72 aa).

A signal peptide spans 1 to 24 (MKMMIAVFVSILLLMFSLSSTAMG). Propeptides lie at residues 25–35 (METEQQNMEER) and 61–72 (RFDPATFGENED).

It belongs to the non-disulfide-bridged peptide (NDBP) superfamily. As to expression, expressed by the venom gland.

It is found in the secreted. Potentiates the hypotensive action of bradykinin (BK) in normotensive rats, and induces a vasorelaxant effect in mesenteric artery rings that is induced by endothelium-dependent release of nitric oxide (NO). Does not inhibit angiotensin converting enzyme (ACE). Shows neither hemolytic activity nor cytotoxicity to normal and cancer cells. Shows moderate antimicrobial activity against the fungi Candida albicans and the filamentous fungus Trichophyton rubrum, as well as against the bacteria C.albicans (MIC=128 ug/mL), C.tropicalis (MIC=128 ug/mL) and Aspergillus flavus (MIC=128 ug/mL). Has no antimicrobial activity against S.aureus, S.epidermidis and P.aeruginosa. This chain is Hypotensin, found in Tityus stigmurus (Brazilian scorpion).